The chain runs to 275 residues: Uroplakin-3b (275 aa).

The signal sequence occupies residues 1-26; sequence MVRTRWQPPLRALLLLVLVWLPQSLS. At 27-196 the chain is on the lumenal side; the sequence is LDLIAYVPQI…DTWPGRRSGC (170 aa). N77 is a glycosylation site (N-linked (GlcNAc...) asparagine). The helical transmembrane segment at 197 to 217 threads the bilayer; that stretch reads MIVITSILSALAGLLLLAFLA. Residues 218–275 are Cytoplasmic-facing; that stretch reads ASTTRFSSLWWPEEAPEQLRIGSFMGKRYMTHHIPPSEAATLPVGCEPGLDPLPSLSP.

This sequence belongs to the uroplakin-3 family. As to quaternary structure, heterodimer with uroplakin-1B (UPK1B). As to expression, expression is urothelium-specific.

It is found in the cell membrane. Functionally, component of the asymmetric unit membrane (AUM); a highly specialized biomembrane elaborated by terminally differentiated urothelial cells. May play an important role in AUM-cytoskeleton interaction in terminally differentiated urothelial cells. It also contributes to the formation of urothelial glycocalyx which may play an important role in preventing bacterial adherence. The chain is Uroplakin-3b (Upk3b) from Mus musculus (Mouse).